A 580-amino-acid chain; its full sequence is N(6)-adenosine-methyltransferase catalytic subunit METTL3 (580 aa).

The tract at residues 1–70 (MSDTWSSIQA…PKPSTASAVP (70 aa)) is disordered. An N-acetylserine; alternate modification is found at Ser-2. A Phosphoserine; alternate modification is found at Ser-2. Over residues 28–37 (QDSGHLDLRN) the composition is skewed to basic and acidic residues. 3 positions are modified to phosphoserine: Ser-43, Ser-48, and Ser-50. Glycyl lysine isopeptide (Lys-Gly) (interchain with G-Cter in SUMO1) cross-links involve residues Lys-177, Lys-211, Lys-212, and Lys-215. The interval 198–219 (LNSSASEPAKEPAKKSRKHAAS) is disordered. The Nuclear localization signal motif lies at 210-215 (AKKSRK). Ser-219 and Ser-243 each carry phosphoserine. Thr-348 carries the phosphothreonine modification. Ser-350 bears the Phosphoserine mark. Residues 377-378 (DI) and Asp-395 each bind S-adenosyl-L-methionine. A gate loop 1 region spans residues 396–410 (PPWDIHMELPYGTLT). Interaction with METTL14 stretches follow at residues 450–454 (ERVDE) and 464–480 (QRII…NHGK). The segment at 462-479 (QLQRIIRTGRTGHWLNHG) is interphase loop. Residues 465 to 478 (RIIRTGRTGHWLNH) form a positively charged region required for RNA-binding region. The tract at residues 507–515 (VRSTSHKPD) is gate loop 2. S-adenosyl-L-methionine is bound by residues Lys-513, 536-539 (RPHN), and 549-550 (NQ).

This sequence belongs to the MT-A70-like family. As to quaternary structure, heterodimer; heterodimerizes with METTL14 to form an antiparallel heterodimer that constitutes an active methyltransferase. Component of the WMM complex, a N6-methyltransferase complex composed of a catalytic subcomplex, named MAC, and of an associated subcomplex, named MACOM. The MAC subcomplex is composed of METTL3 and METTL14. The MACOM subcomplex is composed of WTAP, ZC3H13, CBLL1/HAKAI, VIRMA, and, in some cases of RBM15 (RBM15 or RBM15B). Interacts with NCBP1/CBP80. Interacts with EIF4E. Interacts with EIF3B. Post-translationally, sumoylation inhibits the N6-adenosine-methyltransferase activity. Sumoylation does not affect subcellular location or interaction with METTL14. Desumoylated by SENP1. In terms of tissue distribution, widely expressed at low level. Expressed in spleen, thymus, prostate, testis, ovary, small intestine, colon and peripheral blood leukocytes.

It is found in the nucleus. It localises to the nucleus speckle. The protein resides in the cytoplasm. It carries out the reaction an adenosine in mRNA + S-adenosyl-L-methionine = an N(6)-methyladenosine in mRNA + S-adenosyl-L-homocysteine + H(+). Its activity is regulated as follows. Methyltransferase activity is regulated by miRNAs via a sequence pairing mechanism. Methyltransferase activity is inhibited by sumoylation. Its function is as follows. The METTL3-METTL14 heterodimer forms a N6-methyltransferase complex that methylates adenosine residues at the N(6) position of some RNAs and regulates various processes such as the circadian clock, differentiation of embryonic and hematopoietic stem cells, cortical neurogenesis, response to DNA damage, differentiation of T-cells and primary miRNA processing. In the heterodimer formed with METTL14, METTL3 constitutes the catalytic core. N6-methyladenosine (m6A), which takes place at the 5'-[AG]GAC-3' consensus sites of some mRNAs, plays a role in mRNA stability, processing, translation efficiency and editing. M6A acts as a key regulator of mRNA stability: methylation is completed upon the release of mRNA into the nucleoplasm and promotes mRNA destabilization and degradation. In embryonic stem cells (ESCs), m6A methylation of mRNAs encoding key naive pluripotency-promoting transcripts results in transcript destabilization, promoting differentiation of ESCs. M6A regulates the length of the circadian clock: acts as an early pace-setter in the circadian loop by putting mRNA production on a fast-track for facilitating nuclear processing, thereby providing an early point of control in setting the dynamics of the feedback loop. M6A also regulates circadian regulation of hepatic lipid metabolism. M6A regulates spermatogonial differentiation and meiosis and is essential for male fertility and spermatogenesis. Also required for oogenesis. Involved in the response to DNA damage: in response to ultraviolet irradiation, METTL3 rapidly catalyzes the formation of m6A on poly(A) transcripts at DNA damage sites, leading to the recruitment of POLK to DNA damage sites. M6A is also required for T-cell homeostasis and differentiation: m6A methylation of transcripts of SOCS family members (SOCS1, SOCS3 and CISH) in naive T-cells promotes mRNA destabilization and degradation, promoting T-cell differentiation. Inhibits the type I interferon response by mediating m6A methylation of IFNB. M6A also takes place in other RNA molecules, such as primary miRNA (pri-miRNAs). Mediates m6A methylation of Xist RNA, thereby participating in random X inactivation: m6A methylation of Xist leads to target YTHDC1 reader on Xist and promote transcription repression activity of Xist. M6A also regulates cortical neurogenesis: m6A methylation of transcripts related to transcription factors, neural stem cells, the cell cycle and neuronal differentiation during brain development promotes their destabilization and decay, promoting differentiation of radial glial cells. METTL3 mediates methylation of pri-miRNAs, marking them for recognition and processing by DGCR8. Acts as a positive regulator of mRNA translation independently of the methyltransferase activity: promotes translation by interacting with the translation initiation machinery in the cytoplasm. Its overexpression in a number of cancer cells suggests that it may participate in cancer cell proliferation by promoting mRNA translation. During human coronavirus SARS-CoV-2 infection, adds m6A modifications in SARS-CoV-2 RNA leading to decreased RIGI binding and subsequently dampening the sensing and activation of innate immune responses. The sequence is that of N(6)-adenosine-methyltransferase catalytic subunit METTL3 from Homo sapiens (Human).